The following is a 105-amino-acid chain: Cuticle protein AMP4 (105 aa).

The disordered stretch occupies residues 1 to 21 (DRDAQTLTDERNDQGDGNFRY). Residues 16-81 (DGNFRYEFET…PSSDLLPVGP (66 aa)) enclose the Chitin-binding type R&amp;R domain.

Arthrodial membrane.

This is Cuticle protein AMP4 from Homarus americanus (American lobster).